A 366-amino-acid chain; its full sequence is MAPSGPGGVRRRCRRVLYWIPVVFISLLLGWSYYAYAIQLCIVSMENIGEQVVCLMAYHLLFAMFVWSYWKTIFTLPMNPSKEFHLSYAEKELLEREPRGEAHQEVLRRAAKDLPIYTRTMSGAIRYCDRCRLIKPDRCHHCSVCDKCILKMDHHCPWVNNCVGFSNYKFFLLFLAYSLLYCLFIAATDLQYFIRFWTNGLPDTQAKFHIMFLFFAAAMFSVSLSSLFGYHCWLVSKNKSTLEAFRNPVFRHGTDKNGFSLGFSKNMRQVFGDEKKYWLLPIFSSQGDGCSFPTCLVNQDPEQPSTPAGLNSTAKNPENHQFPAKPLRESQSHLLTDSQTWTENSSNSGRCKAGMSNPALTMENET.

Residues 1–15 lie on the Cytoplasmic side of the membrane; sequence MAPSGPGGVRRRCRR. A helical transmembrane segment spans residues 16–36; that stretch reads VLYWIPVVFISLLLGWSYYAY. At 37 to 47 the chain is on the lumenal side; the sequence is AIQLCIVSMEN. A helical transmembrane segment spans residues 48–68; it reads IGEQVVCLMAYHLLFAMFVWS. The Cytoplasmic segment spans residues 69–169; sequence YWKTIFTLPM…NNCVGFSNYK (101 aa). One can recognise a DHHC domain in the interval 126-176; the sequence is RYCDRCRLIKPDRCHHCSVCDKCILKMDHHCPWVNNCVGFSNYKFFLLFLA. Cys156 acts as the S-palmitoyl cysteine intermediate in catalysis. A helical membrane pass occupies residues 170–190; it reads FFLLFLAYSLLYCLFIAATDL. Topologically, residues 191–207 are lumenal; the sequence is QYFIRFWTNGLPDTQAK. The helical transmembrane segment at 208-228 threads the bilayer; that stretch reads FHIMFLFFAAAMFSVSLSSLF. At 229–366 the chain is on the cytoplasmic side; the sequence is GYHCWLVSKN…NPALTMENET (138 aa). Composition is skewed to polar residues over residues 297 to 316 and 332 to 349; these read VNQD…TAKN and SHLL…SNSG. The disordered stretch occupies residues 297-366; that stretch reads VNQDPEQPST…NPALTMENET (70 aa). Positions 298 to 366 are mediates localization to plasma membrane and recycling endosomes; that stretch reads NQDPEQPSTP…NPALTMENET (69 aa). The Non-canonical dileucine endocytic signal signature appears at 334-335; it reads LL. An NPxY-like endocytic signal motif is present at residues 357 to 360; the sequence is NPAL.

It belongs to the DHHC palmitoyltransferase family. Monomer. Homodimer. The monomeric form has a higher catalytic activity. Post-translationally, autopalmitoylated.

It localises to the postsynaptic density. Its subcellular location is the postsynaptic recycling endosome membrane. It is found in the cell membrane. The protein resides in the endoplasmic reticulum membrane. The protein localises to the golgi apparatus membrane. It catalyses the reaction L-cysteinyl-[protein] + hexadecanoyl-CoA = S-hexadecanoyl-L-cysteinyl-[protein] + CoA. The enzyme catalyses L-cysteinyl-[protein] + tetradecanoyl-CoA = S-tetradecanoyl-L-cysteinyl-[protein] + CoA. It carries out the reaction L-cysteinyl-[protein] + octadecanoyl-CoA = S-octadecanoyl-L-cysteinyl-[protein] + CoA. Functionally, palmitoyltransferase that catalyzes the addition of palmitate onto various protein substrates and is involved in a variety of cellular processes. Has no stringent fatty acid selectivity and in addition to palmitate can also transfer onto target proteins myristate from tetradecanoyl-CoA and stearate from octadecanoyl-CoA. In the nervous system, plays a role in long term synaptic potentiation by palmitoylating AKAP5 through which it regulates protein trafficking from the dendritic recycling endosomes to the plasma membrane and controls both structural and functional plasticity at excitatory synapses. In dendrites, mediates the palmitoylation of DLG4 when synaptic activity decreases and induces synaptic clustering of DLG4 and associated AMPA-type glutamate receptors. Also mediates the de novo and turnover palmitoylation of RGS7BP, a shuttle for Gi/o-specific GTPase-activating proteins/GAPs, promoting its localization to the plasma membrane in response to the activation of G protein-coupled receptors. Through the localization of these GTPase-activating proteins/GAPs, it also probably plays a role in G protein-coupled receptors signaling in neurons. Also probably plays a role in cell adhesion by palmitoylating CD9 and CD151 to regulate their expression and function. Palmitoylates the endoplasmic reticulum protein CKAP4 and regulates its localization to the plasma membrane. Could also palmitoylate LCK and regulate its localization to the plasma membrane. This chain is Palmitoyltransferase ZDHHC2, found in Rattus norvegicus (Rat).